The following is a 302-amino-acid chain: Glycine--tRNA ligase alpha subunit (302 aa).

Belongs to the class-II aminoacyl-tRNA synthetase family. Tetramer of two alpha and two beta subunits.

The protein resides in the cytoplasm. It carries out the reaction tRNA(Gly) + glycine + ATP = glycyl-tRNA(Gly) + AMP + diphosphate. The sequence is that of Glycine--tRNA ligase alpha subunit from Xanthomonas axonopodis pv. citri (strain 306).